The primary structure comprises 218 residues: 3-dehydroquinate dehydratase (218 aa).

3-dehydroquinate contacts are provided by residues 29–31 (EFR) and Arg-56. His-116 serves as the catalytic Proton donor/acceptor. Lys-142 functions as the Schiff-base intermediate with substrate in the catalytic mechanism. Arg-180, Ser-200, and Gln-204 together coordinate 3-dehydroquinate.

This sequence belongs to the type-I 3-dehydroquinase family. As to quaternary structure, homodimer.

It catalyses the reaction 3-dehydroquinate = 3-dehydroshikimate + H2O. Its pathway is metabolic intermediate biosynthesis; chorismate biosynthesis; chorismate from D-erythrose 4-phosphate and phosphoenolpyruvate: step 3/7. Functionally, involved in the third step of the chorismate pathway, which leads to the biosynthesis of aromatic amino acids. Catalyzes the cis-dehydration of 3-dehydroquinate (DHQ) and introduces the first double bond of the aromatic ring to yield 3-dehydroshikimate. In Methanococcus maripaludis (strain C5 / ATCC BAA-1333), this protein is 3-dehydroquinate dehydratase.